An 84-amino-acid chain; its full sequence is Esculentin-1ISb (84 aa).

The first 22 residues, 1 to 22, serve as a signal peptide directing secretion; the sequence is MFTLKKPLLLIVLLGIISLSLC. Residues 23 to 36 constitute a propeptide, removed in mature form; sequence EQERAADEDEGTKI. A disulfide bond links C78 and C84.

Expressed by the skin glands.

It localises to the secreted. Functionally, has antimicrobial activity against Gram-negative bacterium E.coli ATCC 8739 (MIC=3.1 ug), against Gram positive bacteria S.aureus ATCC 6538 (MIC=3.1 ug), methicillin-resistant S.aureus ATCC 43300 (MIC=12.5 ug), B.subtilis ATCC 6633 (MIC=12.5 ug) and against fungus C.albicans ATCC 90028 (MIC=50 ug). The polypeptide is Esculentin-1ISb (Odorrana ishikawae (Ishikawa's frog)).